The sequence spans 160 residues: Ribosomal RNA large subunit methyltransferase H (160 aa).

S-adenosyl-L-methionine is bound by residues leucine 76, glycine 108, and 127-132 (LGELTW).

It belongs to the RNA methyltransferase RlmH family. As to quaternary structure, homodimer.

The protein localises to the cytoplasm. The catalysed reaction is pseudouridine(1915) in 23S rRNA + S-adenosyl-L-methionine = N(3)-methylpseudouridine(1915) in 23S rRNA + S-adenosyl-L-homocysteine + H(+). Its function is as follows. Specifically methylates the pseudouridine at position 1915 (m3Psi1915) in 23S rRNA. The chain is Ribosomal RNA large subunit methyltransferase H from Brucella anthropi (strain ATCC 49188 / DSM 6882 / CCUG 24695 / JCM 21032 / LMG 3331 / NBRC 15819 / NCTC 12168 / Alc 37) (Ochrobactrum anthropi).